We begin with the raw amino-acid sequence, 334 residues long: N-acetylmuramoyl-L-alanine amidase sle1 (334 aa).

Residues 1 to 25 form the signal peptide; the sequence is MQKKVIAAIIGTSAISAVAATQANA. Residues 27 to 70 form the LysM 1 domain; sequence TTHTVKPGESVWAISNKYGISIAKLKSLNNLTSNLIFPNQVLKV. Residues 71–86 are compositionally biased toward low complexity; the sequence is SGSSNSTSNSSRPSTN. The disordered stretch occupies residues 71–90; it reads SGSSNSTSNSSRPSTNSGGG. LysM domains follow at residues 91-134 and 158-201; these read SYYT…KLKV. The Peptidase C51 domain maps to 210–334; it reads GSATTTNRGY…YQVNNYRYIH (125 aa).

It is found in the secreted. Its subcellular location is the cell surface. It catalyses the reaction Hydrolyzes the link between N-acetylmuramoyl residues and L-amino acid residues in certain cell-wall glycopeptides.. Peptidoglycan hydrolase involved in the splitting of the septum during cell division. This chain is N-acetylmuramoyl-L-alanine amidase sle1 (sle1), found in Staphylococcus aureus (strain USA300).